Here is a 329-residue protein sequence, read N- to C-terminus: Peroxidase 56 (329 aa).

Positions 1-31 (MAALKMTISCFLFLQVIYCLLSSFAPTNVQG) are cleaved as a signal peptide. Disulfide bonds link cysteine 41/cysteine 119, cysteine 74/cysteine 79, cysteine 125/cysteine 325, and cysteine 204/cysteine 236. The active-site Proton acceptor is histidine 72. Positions 73, 76, 78, 80, and 82 each coordinate Ca(2+). Asparagine 158 carries N-linked (GlcNAc...) asparagine glycosylation. Proline 167 provides a ligand contact to substrate. The N-linked (GlcNAc...) asparagine glycan is linked to asparagine 172. Histidine 197 is a binding site for heme b. Threonine 198 contributes to the Ca(2+) binding site. Asparagine 213 carries N-linked (GlcNAc...) asparagine glycosylation. Ca(2+) is bound by residues aspartate 248, serine 251, and aspartate 256.

Belongs to the peroxidase family. Classical plant (class III) peroxidase subfamily. Heme b is required as a cofactor. The cofactor is Ca(2+).

The protein resides in the secreted. It catalyses the reaction 2 a phenolic donor + H2O2 = 2 a phenolic radical donor + 2 H2O. In terms of biological role, removal of H(2)O(2), oxidation of toxic reductants, biosynthesis and degradation of lignin, suberization, auxin catabolism, response to environmental stresses such as wounding, pathogen attack and oxidative stress. These functions might be dependent on each isozyme/isoform in each plant tissue. This Arabidopsis thaliana (Mouse-ear cress) protein is Peroxidase 56 (PER56).